The primary structure comprises 398 residues: Acetate kinase (398 aa).

Mg(2+) is bound at residue N8. Residue K15 participates in ATP binding. A substrate-binding site is contributed by R90. The active-site Proton donor/acceptor is D147. Residues H207–G211, D282–R284, and G330–N334 contribute to the ATP site. E383 provides a ligand contact to Mg(2+).

It belongs to the acetokinase family. In terms of assembly, homodimer. Mg(2+) serves as cofactor. It depends on Mn(2+) as a cofactor.

The protein resides in the cytoplasm. It catalyses the reaction acetate + ATP = acetyl phosphate + ADP. It functions in the pathway metabolic intermediate biosynthesis; acetyl-CoA biosynthesis; acetyl-CoA from acetate: step 1/2. In terms of biological role, catalyzes the formation of acetyl phosphate from acetate and ATP. Can also catalyze the reverse reaction. This chain is Acetate kinase, found in Limosilactobacillus fermentum (strain NBRC 3956 / LMG 18251) (Lactobacillus fermentum).